The chain runs to 356 residues: GTPase Obg (356 aa).

An Obg domain is found at 1–158 (MFIDSVKITL…RLVRLELKLI (158 aa)). The region spanning 159 to 339 (ADVGLVGFPN…LKFMLLEEIK (181 aa)) is the OBG-type G domain. Residues 165–172 (GFPNVGKS), 190–194 (FTTLT), 212–215 (DIPG), 280–283 (SKSD), and 320–322 (SSL) contribute to the GTP site. The Mg(2+) site is built by Ser-172 and Thr-192.

This sequence belongs to the TRAFAC class OBG-HflX-like GTPase superfamily. OBG GTPase family. As to quaternary structure, monomer. Mg(2+) is required as a cofactor.

The protein localises to the cytoplasm. An essential GTPase which binds GTP, GDP and possibly (p)ppGpp with moderate affinity, with high nucleotide exchange rates and a fairly low GTP hydrolysis rate. Plays a role in control of the cell cycle, stress response, ribosome biogenesis and in those bacteria that undergo differentiation, in morphogenesis control. This chain is GTPase Obg, found in Campylobacter jejuni subsp. jejuni serotype O:23/36 (strain 81-176).